The chain runs to 94 residues: PTS system galactitol-specific EIIB component (94 aa).

In terms of domain architecture, PTS EIIB type-2 spans 1–94 (MKRKIIVACG…QNKILTILQG (94 aa)). The active-site Phosphocysteine intermediate; for EIIB activity is C9. C9 bears the Phosphocysteine; by EIIA mark.

Forms a complex with one each of subunit of GatA, GatB and 2 subunits of GatC.

It is found in the cytoplasm. It catalyses the reaction galactitol(out) + N(pros)-phospho-L-histidyl-[protein] = galactitol 1-phosphate(in) + L-histidyl-[protein]. The phosphoenolpyruvate-dependent sugar phosphotransferase system (PTS), a major carbohydrate active transport system, catalyzes the phosphorylation of incoming sugar substrates concomitant with their translocation across the cell membrane. The enzyme II complex composed of GatA, GatB and GatC is involved in galactitol transport. It can also use D-glucitol. This is PTS system galactitol-specific EIIB component from Escherichia coli (strain K12).